The chain runs to 917 residues: MATNFLTKIFGSRNDRLLKQYRKTVARINAMEPDYEKLSDEALRGKTQEFKDRIAQGESLDALLPEAFAVVREGSKRIMKMRHFDVQLVGGMALHYGKIAEMRTGEGKTLTATLPVYLNALSGQGVHVVTVNDYLAGRDAQWMGRLYNFLGLTVGINLPQMPREEKQAAYQADITYGTNNEYGFDYLRDNMVYDARERVQRGLNYAIVDEVDSILIDEARTPLIISGQAEDHTALYVAMNKVVPLLVRQEGEADPRTGEGVTKPGDFTLDEKTHQVFLTEQGHENAERILASQGLIPEGASLYDPANITLVHHLYAALRANHLYHRDQHYVVQNGEIVIVDEFTGRLMAGRRWSEGLHQAVEAKEGVNIQAENQTLASITFQNYFRLYNKLSGMTGTADTEAYEFQEIYGLETVVIPPNRPSKRDDQLDRVYKTTREKYEAAIADIRECHERGQPVLVGTTSIENSEIIDELLNKAGLPHQVLNAKQHAREADIVAQAGRPGMITIATNMAGRGTDIVLGGNVEKAIAALEADESLSEAERAARVQELRAQWKLDHEKVTALGGLRIIATERHESRRIDNQLRGRSGRQGDPGSSRFYLSLDDQLMRIFAGDRVKAIMDRLKMPDGEAIEAGIVTRSIESAQRKVEARNFDIRKQLLEYDDVANDQRKVIYQQRNEILDAPDLGVLIDAMRDDCLADVVRQYVPAESVEEQWDLAGLEKALANDWQVSLALQKEVEGSDAITDEEILEKVQQAAREAFLAKVGQVGAENFTQFERMVLLQSFDTNWRDHLSALDYLRQGIHLRGYAQKQPKQEYKREAFELFRQLIDQVKNEVTRLMMTVQVQSSAQLDEATQAMEDRGEGISNVTYSSPTETGEVETVADAATAAQPAAAGVRVGRNDPCPCGSGKKYKQCHGKLA.

ATP contacts are provided by residues Gln-87, 105–109 (GEGKT), and Asp-516. Zn(2+) contacts are provided by Cys-901, Cys-903, Cys-912, and His-913.

The protein belongs to the SecA family. Monomer and homodimer. Part of the essential Sec protein translocation apparatus which comprises SecA, SecYEG and auxiliary proteins SecDF-YajC and YidC. It depends on Zn(2+) as a cofactor.

The protein localises to the cell inner membrane. The protein resides in the cytoplasm. It catalyses the reaction ATP + H2O + cellular proteinSide 1 = ADP + phosphate + cellular proteinSide 2.. Part of the Sec protein translocase complex. Interacts with the SecYEG preprotein conducting channel. Has a central role in coupling the hydrolysis of ATP to the transfer of proteins into and across the cell membrane, serving both as a receptor for the preprotein-SecB complex and as an ATP-driven molecular motor driving the stepwise translocation of polypeptide chains across the membrane. This chain is Protein translocase subunit SecA, found in Acidovorax ebreus (strain TPSY) (Diaphorobacter sp. (strain TPSY)).